The chain runs to 632 residues: MYDLLKTIDDPADLRRLDRRQLQPLADELRAFVLDSVSQTGGHLSSNLGTVELTIALHYVFDTPRDRIVWDVGHQTYPHKILTGRRDQMSTLRQLGGISGFPKRDESPYDTFGTAHSSTSISAALGMAIGSKLRGDDRFAIAVIGDGAMTAGMAFEAMNNAGVEDDVPLLVILNDNDMSISPPVGALNRHLARLMSGRFYAAARAGVERVLRHAPPVLDLARKLEEHAKGMIVPATLFEEFGFNYIGPIDGHDLDSLIPTLQNIKELRGPQFLHVVTKKGQGYKLAEADPVLYHGPGKFNPAEGIKPSTTPAKKTYTQVFGEWLCDAAELDSRVVGITPAMREGSGMVEFEKRFPDRYYDVGIAEQHAVTFAGGLATEGMKPVVAIYSTFLQRGYDQLIHDVALQNLPVVFAIDRAGLVGADGATHAGAYDLAFMRCIPNMTIMAASDENECRQMLYTALQQPNPTAVRYPRGAGTGVATVKQMAALPLGKGEVRRQSTQPAGKRIAILAFGTMVAPSLAAAEQLDATVANMRFVKPIDAALVRELAETHDAVVTVEEGCVMGGAGSACVEAMMESGVIRPVLQLGLPDRFIDHGDPAKLLASCGLDAAGIAKSIRERFVEHASGKSVKRVA.

Residues His-74 and 115–117 each bind thiamine diphosphate; that span reads AHS. Residue Asp-146 coordinates Mg(2+). Thiamine diphosphate contacts are provided by residues 147 to 148, Asn-176, Tyr-283, and Glu-365; that span reads GA. Residue Asn-176 coordinates Mg(2+).

It belongs to the transketolase family. DXPS subfamily. As to quaternary structure, homodimer. Requires Mg(2+) as cofactor. It depends on thiamine diphosphate as a cofactor.

The enzyme catalyses D-glyceraldehyde 3-phosphate + pyruvate + H(+) = 1-deoxy-D-xylulose 5-phosphate + CO2. Its pathway is metabolic intermediate biosynthesis; 1-deoxy-D-xylulose 5-phosphate biosynthesis; 1-deoxy-D-xylulose 5-phosphate from D-glyceraldehyde 3-phosphate and pyruvate: step 1/1. Functionally, catalyzes the acyloin condensation reaction between C atoms 2 and 3 of pyruvate and glyceraldehyde 3-phosphate to yield 1-deoxy-D-xylulose-5-phosphate (DXP). This is 1-deoxy-D-xylulose-5-phosphate synthase from Paraburkholderia phymatum (strain DSM 17167 / CIP 108236 / LMG 21445 / STM815) (Burkholderia phymatum).